Reading from the N-terminus, the 199-residue chain is Translation initiation factor IF-3 (199 aa).

The protein belongs to the IF-3 family. Monomer.

Its subcellular location is the cytoplasm. Its function is as follows. IF-3 binds to the 30S ribosomal subunit and shifts the equilibrium between 70S ribosomes and their 50S and 30S subunits in favor of the free subunits, thus enhancing the availability of 30S subunits on which protein synthesis initiation begins. The polypeptide is Translation initiation factor IF-3 (Gloeobacter violaceus (strain ATCC 29082 / PCC 7421)).